Reading from the N-terminus, the 64-residue chain is Small ribosomal subunit protein eS17 (64 aa).

It belongs to the eukaryotic ribosomal protein eS17 family.

The chain is Small ribosomal subunit protein eS17 from Methanosarcina barkeri (strain Fusaro / DSM 804).